The chain runs to 635 residues: Probable ethylene response sensor 2 (635 aa).

3 consecutive transmembrane segments (helical) span residues 24–44 (ISDF…IYFV), 59–79 (FGAF…TFAI), and 94–114 (ATAV…PDLL). Cu cation is bound by residues C66 and H70. One can recognise a GAF domain in the interval 159–308 (DRHTILRTTL…VVADQVAVAL (150 aa)). One can recognise a Histidine kinase domain in the interval 351 to 589 (VMNHEMRTPM…MFFVKLGMPE (239 aa)). The residue at position 354 (H354) is a Phosphohistidine; by autocatalysis.

This sequence belongs to the ethylene receptor family. In terms of assembly, homodimer. It depends on Cu cation as a cofactor.

The protein resides in the endoplasmic reticulum membrane. It carries out the reaction ATP + protein L-histidine = ADP + protein N-phospho-L-histidine.. Its function is as follows. Ethylene receptor related to bacterial two-component regulators. Acts as a negative regulator of ethylene signaling. May play a role in the regulation of flowering by up-regulating GI (GIGANTEA) and RCN1 and regulate starch accumulation by down-regulating the alpha-amylase AMY3D. This Oryza sativa subsp. japonica (Rice) protein is Probable ethylene response sensor 2 (ERS2).